A 168-amino-acid chain; its full sequence is uncharacterized protein (168 aa).

A disordered region spans residues 1-52 (MVLGLASFPESLSSQSETATQPRRPSVKWDLGSDYRKGTEETTASGSNFRRE). Residues 10–23 (ESLSSQSETATQPR) show a composition bias toward polar residues. A compositionally biased stretch (basic and acidic residues) spans 31–40 (LGSDYRKGTE).

This is an uncharacterized protein from Mus musculus (Mouse).